We begin with the raw amino-acid sequence, 669 residues long: Collagen alpha-1(II) chain (669 aa).

P3 and P12 each carry 4-hydroxyproline. Over residues 318-327 (XXXXXXXGAP) the composition is skewed to low complexity. Disordered stretches follow at residues 318–360 (XXXX…XXXX), 405–438 (XXXX…XXXX), and 638–669 (XXGF…AGPR). 2 positions are modified to 4-hydroxyproline: P336 and P345. 2 stretches are compositionally biased toward low complexity: residues 339–360 (AGFA…XXXX) and 405–420 (XXXX…NGNP). A 3-hydroxyproline modification is found at P413. A 4-hydroxyproline mark is found at P414, P420, and P426. Low complexity-rich tracts occupy residues 429 to 438 (AGKXXXXXXX) and 638 to 647 (XXGFTGLQGL). The residue at position 648 (P648) is a 4-hydroxyproline. A 3-hydroxyproline modification is found at P650.

The protein belongs to the fibrillar collagen family. In terms of assembly, homotrimers of alpha 1(II) chains. Contains mostly 4-hydroxyproline. Prolines at the third position of the tripeptide repeating unit (G-X-P) are 4-hydroxylated in some or all of the chains. In terms of processing, contains 3-hydroxyproline at a few sites. This modification occurs on the first proline residue in the sequence motif Gly-Pro-Hyp, where Hyp is 4-hydroxyproline.

The protein resides in the secreted. It localises to the extracellular space. Its subcellular location is the extracellular matrix. Functionally, type II collagen is specific for cartilaginous tissues. It is essential for the normal embryonic development of the skeleton, for linear growth and for the ability of cartilage to resist compressive forces. This chain is Collagen alpha-1(II) chain, found in Mammut americanum (American mastodon).